Consider the following 467-residue polypeptide: MSSILPFTPPVVKRLLGWKKSAGGSGGAGGGEQNGQEEKWCEKAVKSLVKKLKKTGRLDELEKAITTQNCNTKCVTIPSTCSEIWGLSTANTVDQWDTTGLYSFSEQTRSLDGRLQVSHRKGLPHVIYCRLWRWPDLHSHHELKAIENCEYAFSLKKDEVCVNPYHYQRVETPVLPPVLVPRHTEILTELPPLDDYTHSIPENTNFPAGIEPQSNYIPETPPPGYISEDGETSDQQLNQSMDTGSPAELSPTTLSPVNHSLDLQPVTYSEPAFWCSIAYYELNQRVGETFHASQPSLTVDGFTDPSNSERFCLGLLSNVNRNATVEMTRRHIGRGVRLYYIGGEVFAECLSDSAIFVQSPNCNQRYGWHPATVCKIPPGCNLKIFNNQEFAALLAQSVNQGFEAVYQLTRMCTIRMSFVKGWGAEYRRQTVTSTPCWIELHLNGPLQWLDKVLTQMGSPSVRCSSMS.

The residue at position 2 (Ser2) is an N-acetylserine. Thr8 carries the post-translational modification Phosphothreonine. Positions 10–176 (PVVKRLLGWK…YQRVETPVLP (167 aa)) constitute an MH1 domain. Lys19 carries the N6-acetyllysine modification. Cys74, Cys149, Cys161, and His166 together coordinate Zn(2+). The span at 207–217 (PAGIEPQSNYI) shows a compositional bias: polar residues. Positions 207 to 251 (PAGIEPQSNYIPETPPPGYISEDGETSDQQLNQSMDTGSPAELSP) are disordered. Residue Thr220 is modified to Phosphothreonine. Positions 221-225 (PPPGY) match the PY-motif motif. Polar residues predominate over residues 233-243 (SDQQLNQSMDT). Phosphoserine; by CAMK2 is present on Ser240. Phosphoserine is present on residues Ser245, Ser250, Ser255, Ser458, Ser460, and Ser464. Positions 274–467 (WCSIAYYELN…SPSVRCSSMS (194 aa)) constitute an MH2 domain. Phosphoserine; by TGFBR1 occurs at positions 465 and 467.

The protein belongs to the dwarfin/SMAD family. As to quaternary structure, monomer; in the absence of TGF-beta. Heterodimer; in the presence of TGF-beta. Forms a heterodimer with co-SMAD, SMAD4, in the nucleus to form the transactivation complex SMAD2/SMAD4. Found in a complex with SMAD3 and TRIM33 upon addition of TGF-beta. Identified in a complex that contains at least ZNF451, SMAD2, SMAD3 and SMAD4. Interacts (via the MH2 domain) with ZFYVE9; may form trimers with the SMAD4 co-SMAD. Interacts with TAZ/WWRT1. Interacts with FOXH1. Interacts with SNW1. Interacts with CREB-binding protein (CBP) and EP300. Interacts with SNON. Interacts with ALK4/ACVR1B. Interacts with SKOR1. Interacts with SKOR2. Interacts with PRDM16. Interacts (via MH2 domain) with LEMD3. Interacts with RBPMS. Interacts with WWP1. Interacts (dephosphorylated form, via the MH1 and MH2 domains) with RANBP3 (via its C-terminal R domain); the interaction results in the export of dephosphorylated SMAD3 out of the nucleus and termination of the TGF-beta signaling. Interacts with PDPK1 (via PH domain). Interacts with DAB2; the interactions are enhanced upon TGF-beta stimulation. Interacts with USP15. Interacts with PPP5C. Interacts with LDLRAD4 (via the SMAD interaction motif). Interacts (via MH2 domain) with PMEPA1 (via the SMAD interaction motif). Interacts with ZFHX3. Interacts with ZNF451. Interacts with SMURF2 when phosphorylated on Ser-465/467. Interacts with PPM1A. Interacts with TGF-beta. Interacts with TGFBR1. Interacts with TGIF. Interacts with SMAD3 and TRIM33. Interacts with ZNF580. Interacts with NEDD4L in response to TGF-beta. Interacts with HGS. Interacts with AIP1. Interacts with WWP1. Interacts with PML. Interacts weakly with ZNF8. Interacts (when phosphorylated) with RNF111; RNF111 acts as an enhancer of the transcriptional responses by mediating ubiquitination and degradation of SMAD2 inhibitors. Interacts with YAP1 (when phosphorylated at 'Ser-112'). Interacts when phosphorylated with IPO7; the interaction facilitates translocation of SMAD2 to the nucleus. Interacts with MTMR4; negatively regulates TGF-beta signaling through SMAD2 dephosphorylation and retention in endosomes. Post-translationally, in response to TGF-beta, phosphorylated on the C-terminal SXS motif by TGF-beta and activin type 1 receptor kinases, phosphorylation declines progressively in a KMT5A-dependent manner. Phosphorylation in this motif is required for interaction with a number of proteins including SMURF2, SNON and SMAD4 in response to TGF-beta. Dephosphorylated in this motif by PPM1A leading to disruption of the SMAD2/3-SMAD4 complex, nuclear export and termination of the TGF-beta signaling. In response to decorin, the naturally occurring inhibitor of TGF-beta signaling, phosphorylated on Ser-240 by CaMK2. Phosphorylated by MAPK3 upon EGF stimulation; which increases transcriptional activity and stability, and is blocked by calmodulin. Phosphorylated by PDPK1. Acetylated on Lys-19 by coactivators in response to TGF-beta signaling, which increases transcriptional activity. In terms of processing, in response to TGF-beta, ubiquitinated by NEDD4L; which promotes its degradation. Monoubiquitinated, leading to prevent DNA-binding. Deubiquitination by USP15 alleviates inhibition and promotes activation of TGF-beta target genes. Ubiquitinated by RNF111, leading to its degradation: only SMAD2 proteins that are 'in use' are targeted by RNF111, RNF111 playing a key role in activating SMAD2 and regulating its turnover. Expressed in cardiomyocytes.

It is found in the cytoplasm. It localises to the nucleus. In terms of biological role, receptor-regulated SMAD (R-SMAD) that is an intracellular signal transducer and transcriptional modulator activated by TGF-beta (transforming growth factor) and activin type 1 receptor kinases. Binds the TRE element in the promoter region of many genes that are regulated by TGF-beta and, on formation of the SMAD2/SMAD4 complex, activates transcription. Promotes TGFB1-mediated transcription of odontoblastic differentiation genes in dental papilla cells. Positively regulates PDPK1 kinase activity by stimulating its dissociation from the 14-3-3 protein YWHAQ which acts as a negative regulator. This is Mothers against decapentaplegic homolog 2 (Smad2) from Rattus norvegicus (Rat).